We begin with the raw amino-acid sequence, 63 residues long: Lysis protein (63 aa).

A helical membrane pass occupies residues 21-43 (LYVWIALAIVLSDFTSIFSHWIW).

The protein belongs to the Leviviricetes lysis protein family.

The protein localises to the host cell inner membrane. The protein resides in the host cell outer membrane. Its function is as follows. Induces the formation of specific membrane adhesion sites between the inner and outer membranes, apparently leading to host cell lysis. Lysis may be performed via activation of host murein hydrolases. This is Lysis protein from Escherichia coli (Bacteriophage JP34).